The primary structure comprises 1148 residues: Envelopment polyprotein (1148 aa).

Residues 1–23 (MGELSPVCLYLLLQGLLLCNTGA) form the signal peptide. Topologically, residues 24–495 (ARNLNELKME…VPGLHGWATM (472 aa)) are lumenal. Disulfide bonds link cysteine 34–cysteine 159, cysteine 68–cysteine 165, cysteine 117–cysteine 136, cysteine 141–cysteine 146, cysteine 183–cysteine 193, and cysteine 218–cysteine 257. Asparagine 142 is a glycosylation site (N-linked (GlcNAc...) asparagine; by host). A glycan (N-linked (GlcNAc...) asparagine; by host) is linked at asparagine 357. 4 cysteine pairs are disulfide-bonded: cysteine 386–cysteine 445, cysteine 390–cysteine 399, cysteine 415–cysteine 434, and cysteine 462–cysteine 485. N-linked (GlcNAc...) asparagine; by host glycosylation occurs at asparagine 409. Residues 496–516 (LLLLTLCFGWVLIPTITMILL) traverse the membrane as a helical segment. Residues 517-637 (KILIAFAYLC…LSLFRYRSRF (121 aa)) are Cytoplasmic-facing. A binding to the ribonucleoprotein region spans residues 526–543 (CSKYNTDSKFRILIEKVK). CCHC-type zinc fingers lie at residues 555–575 (CEVC…RKSC) and 580–601 (CPYC…FKVC). Binding to the ribonucleoprotein stretches follow at residues 598–615 (FKVC…RKSL), 602–613 (KLTSRFQENLRK), and 621–635 (MQGC…RYRS). Residues 621 to 644 (MQGCYRTLSLFRYRSRFFVGLVWC) form the ITAM domain. The YxxL signature appears at 625–628 (YRTL). A helical membrane pass occupies residues 638–658 (FVGLVWCVLLVLELIVWAASA). The Lumenal portion of the chain corresponds to 659–1114 (ETQNLNAGWT…EWILGVLNGN (456 aa)). Disulfide bonds link cysteine 745–cysteine 780, cysteine 749–cysteine 787, cysteine 761–cysteine 894, cysteine 775–cysteine 905, cysteine 790–cysteine 913, cysteine 816–cysteine 825, cysteine 833–cysteine 842, and cysteine 873–cysteine 877. A fusion loop region spans residues 767 to 787 (YEYETGWGCNPPDCPGVGTGC). Asparagine 937 carries N-linked (GlcNAc...) asparagine; by host glycosylation. 5 cysteine pairs are disulfide-bonded: cysteine 979–cysteine 1009, cysteine 1002–cysteine 1054, cysteine 1019–cysteine 1024, cysteine 1055–cysteine 1060, and cysteine 1094–cysteine 1098. Residues 1115 to 1135 (WMVVAVLVVLLILSILLFTLC) form a helical membrane-spanning segment. Binding to the ribonucleoprotein stretches follow at residues 1131 to 1143 (LFTL…PSYR) and 1131 to 1148 (LFTL…EHKP). At 1136 to 1148 (CPRRPSYRKEHKP) the chain is on the cytoplasmic side.

It belongs to the hantavirus envelope glycoprotein family. Homodimer. Homotetramer; forms heterotetrameric Gn-Gc spikes in the pre-fusion conformation. Interacts (via C-terminus) with the nucleoprotein. Interacts with host TUFM; this interaction contributes to the virus-induced degradation of mitochondria by autophagy, which leads to degradation of host MAVS and inhibition of type I interferon (IFN) responses. Interacts with host MAP1LC3B; this interaction contributes to the virus-induced degradation of mitochondria by autophagy, which leads to degradation of host MAVS and inhibition of type I interferon (IFN) responses. In terms of assembly, homodimer. Homotetramer; forms heterotetrameric Gn-Gc spikes in the pre-fusion conformation. Homotrimer; forms homotrimer in the post-fusion conformation at acidic pH. Interacts (via C-terminus) with the nucleoprotein. In terms of processing, envelope polyprotein precursor is quickly cleaved in vivo just after synthesis, presumably by host signal peptidase.

It localises to the virion membrane. Its subcellular location is the host cell surface. The protein localises to the host Golgi apparatus membrane. The protein resides in the host endoplasmic reticulum membrane. It is found in the host mitochondrion. Forms homotetramers with glycoprotein C at the surface of the virion. Attaches the virion to host cell receptors including integrin ITGAV/ITGB3. This attachment induces virion internalization predominantly through clathrin-dependent endocytosis. Mediates the assembly and budding of infectious virus particles through its interaction with the nucleocapsid protein and the viral genome. May dysregulate normal immune and endothelial cell responses through an ITAM motif. Translocates to mitochondria, binds to host TUFM and recruits MAP1LC3B. These interactions induce mitochondrial autophagy and therefore destruction of host MAVS leading to inhibition of type I interferon (IFN) responses. Concomitant breakdown of glycoprotein N is apparently prevented by the nucleoprotein that may inhibit Gn-stimulated autophagosome-lysosome fusion. Interacts with the viral genomic RNA. In terms of biological role, forms homotetramers with glycoprotein N at the surface of the virion. Attaches the virion to host cell receptors including integrin ITGAV/ITGB3. This attachment induces virion internalization predominantly through clathrin-dependent endocytosis. Class II fusion protein that promotes fusion of viral membrane with host endosomal membrane after endocytosis of the virion. The sequence is that of Envelopment polyprotein (GP) from Puumala virus (strain K27).